A 519-amino-acid polypeptide reads, in one-letter code: O-fucosyltransferase 1 (519 aa).

The Cytoplasmic portion of the chain corresponds to 1 to 24; sequence MRRLGHHRLHGKTGGVGTKGMVAK. The helical; Signal-anchor for type II membrane protein transmembrane segment at 25–45 threads the bilayer; it reads LSIGVIVLLICTLSLLFSANI. Residues 46-519 lie on the Lumenal side of the membrane; sequence GSNREPTRPS…TNSTVTGLER (474 aa). The interval 67-86 is disordered; it reads KSGGWRPSSAPRSDWPPPTK. N-linked (GlcNAc...) asparagine glycosylation occurs at Asn-118. Residue 260–262 coordinates substrate; the sequence is HLR. Asn-327, Asn-357, and Asn-511 each carry an N-linked (GlcNAc...) asparagine glycan. The tract at residues 497–519 is disordered; sequence RLESIRDPDSTSQTNSTVTGLER. The span at 506–519 shows a compositional bias: polar residues; it reads STSQTNSTVTGLER.

It belongs to the glycosyltransferase GT106 family.

It localises to the golgi apparatus membrane. It functions in the pathway glycan metabolism. The sequence is that of O-fucosyltransferase 1 from Arabidopsis thaliana (Mouse-ear cress).